A 167-amino-acid polypeptide reads, in one-letter code: Probable chemoreceptor glutamine deamidase CheD (167 aa).

This sequence belongs to the CheD family.

The catalysed reaction is L-glutaminyl-[protein] + H2O = L-glutamyl-[protein] + NH4(+). Probably deamidates glutamine residues to glutamate on methyl-accepting chemotaxis receptors (MCPs), playing an important role in chemotaxis. In Moorella thermoacetica (strain ATCC 39073 / JCM 9320), this protein is Probable chemoreceptor glutamine deamidase CheD.